The primary structure comprises 522 residues: F-box-like/WD repeat-containing protein TBL1XR1-B (522 aa).

The LisH domain maps to 4-36 (SSDEVNFLVYRYLQESGFSHSAFTFGIESHISQ). In terms of domain architecture, F-box-like spans 41-86 (GALVPPAALISIIQKGLQYVEAEVSINEDGTLFDGRPIESLSLIDA). Residues 122–150 (ATSANNQQPPAKNGESTANGEENGGHALA) form a disordered region. Over residues 123–141 (TSANNQQPPAKNGESTANG) the composition is skewed to polar residues. WD repeat units follow at residues 175-214 (GHES…TSGS), 231-270 (PSNK…ASTL), 272-311 (QHKG…AKQQ), 314-352 (FHSA…PIKT), 355-394 (GHTN…CVHD), 397-445 (AHNK…CIHT), 448-487 (KHQE…LVHS), and 489-522 (RGTG…DLRK).

This sequence belongs to the WD repeat EBI family. In terms of assembly, interacts with heterodimers of rxra and thrb, and this interaction is abrogated by thyroid hormone binding to thrb. Interacts with ncor1.

The protein localises to the nucleus. F-box-like protein which acts as an integral component of the N-CoR transcriptional corepressor complex. Probably regulates transcription activation mediated by nuclear receptors. May mediate the recruitment of the 19S proteasome complex, leading to the subsequent proteasomal degradation of the N-CoR complex, thereby allowing cofactor exchange and transcription activation. In Xenopus laevis (African clawed frog), this protein is F-box-like/WD repeat-containing protein TBL1XR1-B (tbl1xr1-b).